Reading from the N-terminus, the 182-residue chain is ATP synthase subunit delta (182 aa).

It belongs to the ATPase delta chain family. In terms of assembly, F-type ATPases have 2 components, F(1) - the catalytic core - and F(0) - the membrane proton channel. F(1) has five subunits: alpha(3), beta(3), gamma(1), delta(1), epsilon(1). CF(0) has four main subunits: a(1), b(1), b'(1) and c(10-14). The alpha and beta chains form an alternating ring which encloses part of the gamma chain. F(1) is attached to F(0) by a central stalk formed by the gamma and epsilon chains, while a peripheral stalk is formed by the delta, b and b' chains.

It is found in the cellular thylakoid membrane. Functionally, f(1)F(0) ATP synthase produces ATP from ADP in the presence of a proton or sodium gradient. F-type ATPases consist of two structural domains, F(1) containing the extramembraneous catalytic core and F(0) containing the membrane proton channel, linked together by a central stalk and a peripheral stalk. During catalysis, ATP synthesis in the catalytic domain of F(1) is coupled via a rotary mechanism of the central stalk subunits to proton translocation. This protein is part of the stalk that links CF(0) to CF(1). It either transmits conformational changes from CF(0) to CF(1) or is implicated in proton conduction. The protein is ATP synthase subunit delta of Synechococcus sp. (strain JA-3-3Ab) (Cyanobacteria bacterium Yellowstone A-Prime).